The sequence spans 397 residues: Elongation factor Tu (397 aa).

The 198-residue stretch at 10–207 (KPHVNIGTIG…ACDSYIEEPE (198 aa)) folds into the tr-type G domain. Residues 19–26 (GHIDHGKT) are G1. Residue 19–26 (GHIDHGKT) participates in GTP binding. Thr-26 contributes to the Mg(2+) binding site. Residues 60–64 (GITIA) form a G2 region. The segment at 81-84 (DCPG) is G3. GTP-binding positions include 81–85 (DCPGH) and 136–139 (NKCD). The interval 136–139 (NKCD) is G4. Residues 174–176 (SAL) are G5.

Belongs to the TRAFAC class translation factor GTPase superfamily. Classic translation factor GTPase family. EF-Tu/EF-1A subfamily. As to quaternary structure, monomer.

The protein resides in the cytoplasm. The catalysed reaction is GTP + H2O = GDP + phosphate + H(+). Functionally, GTP hydrolase that promotes the GTP-dependent binding of aminoacyl-tRNA to the A-site of ribosomes during protein biosynthesis. This is Elongation factor Tu from Maridesulfovibrio salexigens (strain ATCC 14822 / DSM 2638 / NCIMB 8403 / VKM B-1763) (Desulfovibrio salexigens).